We begin with the raw amino-acid sequence, 267 residues long: Expansin-B1 (267 aa).

Positions methionine 1–cysteine 22 are cleaved as a signal peptide. N-linked (GlcNAc...) asparagine glycosylation occurs at asparagine 32. An Expansin-like EG45 domain is found at glycine 61–aspartate 167. Intrachain disulfides connect cysteine 64-cysteine 92, cysteine 95-cysteine 162, and cysteine 100-cysteine 106. Positions asparagine 181–serine 262 constitute an Expansin-like CBD domain.

This sequence belongs to the expansin family. Expansin B subfamily. In terms of tissue distribution, expressed in mature anthers but not in vegetative or other floral tissues.

The protein localises to the secreted. It is found in the cell wall. It localises to the membrane. May cause loosening and extension of plant cell walls by disrupting non-covalent bonding between cellulose microfibrils and matrix glucans. No enzymatic activity has been found. May be required for rapid internodal elongation in deepwater rice during submergence. The polypeptide is Expansin-B1 (EXPB1a) (Oryza sativa subsp. japonica (Rice)).